Consider the following 129-residue polypeptide: Small ribosomal subunit protein uS12 (129 aa).

Positions Met-1–Glu-25 are disordered. Residues Phe-10–Lys-20 show a composition bias toward basic residues. Position 89 is a 3-methylthioaspartic acid (Asp-89). Positions Gly-109–Lys-129 are disordered.

This sequence belongs to the universal ribosomal protein uS12 family. As to quaternary structure, part of the 30S ribosomal subunit. Contacts proteins S8 and S17. May interact with IF1 in the 30S initiation complex.

With S4 and S5 plays an important role in translational accuracy. Its function is as follows. Interacts with and stabilizes bases of the 16S rRNA that are involved in tRNA selection in the A site and with the mRNA backbone. Located at the interface of the 30S and 50S subunits, it traverses the body of the 30S subunit contacting proteins on the other side and probably holding the rRNA structure together. The combined cluster of proteins S8, S12 and S17 appears to hold together the shoulder and platform of the 30S subunit. The protein is Small ribosomal subunit protein uS12 of Rickettsia peacockii (strain Rustic).